The following is a 397-amino-acid chain: Acetate kinase (397 aa).

Residue asparagine 7 coordinates Mg(2+). ATP is bound at residue lysine 14. Position 91 (arginine 91) interacts with substrate. The active-site Proton donor/acceptor is the aspartate 147. ATP-binding positions include 207–211, 282–284, and 330–334; these read HLGNG, DFR, and GLGEN. Glutamate 383 contacts Mg(2+).

It belongs to the acetokinase family. Homodimer. Mg(2+) serves as cofactor. The cofactor is Mn(2+).

It localises to the cytoplasm. It carries out the reaction acetate + ATP = acetyl phosphate + ADP. Its pathway is metabolic intermediate biosynthesis; acetyl-CoA biosynthesis; acetyl-CoA from acetate: step 1/2. In terms of biological role, catalyzes the formation of acetyl phosphate from acetate and ATP. Can also catalyze the reverse reaction. This is Acetate kinase from Moorella thermoacetica (strain ATCC 39073 / JCM 9320).